Here is a 254-residue protein sequence, read N- to C-terminus: Imidazole glycerol phosphate synthase subunit HisF (254 aa).

Residues Asp-12 and Asp-132 contribute to the active site.

Belongs to the HisA/HisF family. Heterodimer of HisH and HisF.

The protein localises to the cytoplasm. The enzyme catalyses 5-[(5-phospho-1-deoxy-D-ribulos-1-ylimino)methylamino]-1-(5-phospho-beta-D-ribosyl)imidazole-4-carboxamide + L-glutamine = D-erythro-1-(imidazol-4-yl)glycerol 3-phosphate + 5-amino-1-(5-phospho-beta-D-ribosyl)imidazole-4-carboxamide + L-glutamate + H(+). It functions in the pathway amino-acid biosynthesis; L-histidine biosynthesis; L-histidine from 5-phospho-alpha-D-ribose 1-diphosphate: step 5/9. In terms of biological role, IGPS catalyzes the conversion of PRFAR and glutamine to IGP, AICAR and glutamate. The HisF subunit catalyzes the cyclization activity that produces IGP and AICAR from PRFAR using the ammonia provided by the HisH subunit. The protein is Imidazole glycerol phosphate synthase subunit HisF of Symbiobacterium thermophilum (strain DSM 24528 / JCM 14929 / IAM 14863 / T).